A 264-amino-acid polypeptide reads, in one-letter code: Tryptophan synthase alpha chain (264 aa).

Residues glutamate 49 and aspartate 60 each act as proton acceptor in the active site.

The protein belongs to the TrpA family. In terms of assembly, tetramer of two alpha and two beta chains.

It carries out the reaction (1S,2R)-1-C-(indol-3-yl)glycerol 3-phosphate + L-serine = D-glyceraldehyde 3-phosphate + L-tryptophan + H2O. It participates in amino-acid biosynthesis; L-tryptophan biosynthesis; L-tryptophan from chorismate: step 5/5. Functionally, the alpha subunit is responsible for the aldol cleavage of indoleglycerol phosphate to indole and glyceraldehyde 3-phosphate. In Synechocystis sp. (strain ATCC 27184 / PCC 6803 / Kazusa), this protein is Tryptophan synthase alpha chain.